The sequence spans 274 residues: Ribosomal RNA small subunit methyltransferase A (274 aa).

Positions 15, 17, 42, 64, 89, and 108 each coordinate S-adenosyl-L-methionine.

This sequence belongs to the class I-like SAM-binding methyltransferase superfamily. rRNA adenine N(6)-methyltransferase family. RsmA subfamily.

It is found in the cytoplasm. The enzyme catalyses adenosine(1518)/adenosine(1519) in 16S rRNA + 4 S-adenosyl-L-methionine = N(6)-dimethyladenosine(1518)/N(6)-dimethyladenosine(1519) in 16S rRNA + 4 S-adenosyl-L-homocysteine + 4 H(+). Specifically dimethylates two adjacent adenosines (A1518 and A1519) in the loop of a conserved hairpin near the 3'-end of 16S rRNA in the 30S particle. May play a critical role in biogenesis of 30S subunits. This Prochlorococcus marinus (strain AS9601) protein is Ribosomal RNA small subunit methyltransferase A.